A 473-amino-acid polypeptide reads, in one-letter code: GTPase Der (473 aa).

2 EngA-type G domains span residues 3–167 (FTVA…GKDR) and 203–378 (LRVA…RVWN). GTP contacts are provided by residues 9–16 (GRPNVGKS), 56–60 (DTAGL), 119–122 (NKSE), 209–216 (GRPNAGKS), 256–260 (DTAGM), and 321–324 (NKWD). One can recognise a KH-like domain in the interval 379–463 (KRISTARLNR…PIRIHFRSPD (85 aa)).

The protein belongs to the TRAFAC class TrmE-Era-EngA-EngB-Septin-like GTPase superfamily. EngA (Der) GTPase family. Associates with the 50S ribosomal subunit.

Its function is as follows. GTPase that plays an essential role in the late steps of ribosome biogenesis. The sequence is that of GTPase Der from Rhizobium etli (strain ATCC 51251 / DSM 11541 / JCM 21823 / NBRC 15573 / CFN 42).